The chain runs to 202 residues: Ras-related protein ORAB-1 (202 aa).

Residues 15–23 (GDSGVGKSC), 33–40 (YTESYIST), 63–67 (DTAGQ), 121–124 (NKCD), and 151–153 (SAK) each bind GTP. The Effector region motif lies at 37-45 (YISTIGVDF). The segment at 173–202 (MGPGATSGGSEKSNVNIQSTPVKSSGGGCC) is disordered. Positions 180–195 (GGSEKSNVNIQSTPVK) are enriched in polar residues. Residues Cys201 and Cys202 are each lipidated (S-geranylgeranyl cysteine).

The protein belongs to the small GTPase superfamily. Rab family.

It localises to the cell membrane. Protein transport. Probably involved in vesicular traffic. This Diplobatis ommata (Ocellated electric ray) protein is Ras-related protein ORAB-1.